A 353-amino-acid polypeptide reads, in one-letter code: Photosystem II protein D1 (353 aa).

An N-acetylthreonine modification is found at Thr2. Thr2 is subject to Phosphothreonine. A run of 3 helical transmembrane segments spans residues 29 to 46 (YIGWFGVLMIPTLLTATS), 118 to 133 (HFLLGVACYMGREWEL), and 142 to 156 (WIAVAYSAPVAAATA). Residue His118 participates in chlorophyll a binding. Residue Tyr126 participates in pheophytin a binding. Asp170 and Glu189 together coordinate [CaMn4O5] cluster. A helical transmembrane segment spans residues 197–218 (FHMLGVAGVFGGSLFSAMHGSL). Residue His198 participates in chlorophyll a binding. A quinone-binding positions include His215 and 264–265 (SF). Fe cation is bound at residue His215. Residue His272 participates in Fe cation binding. Residues 274 to 288 (FLAAWPVVGIWFTAL) traverse the membrane as a helical segment. Residues His332, Glu333, Asp342, and Ala344 each contribute to the [CaMn4O5] cluster site. Positions 345–353 (AVEAPAVNG) are excised as a propeptide.

It belongs to the reaction center PufL/M/PsbA/D family. As to quaternary structure, PSII is composed of 1 copy each of membrane proteins PsbA, PsbB, PsbC, PsbD, PsbE, PsbF, PsbH, PsbI, PsbJ, PsbK, PsbL, PsbM, PsbT, PsbX, PsbY, PsbZ, Psb30/Ycf12, at least 3 peripheral proteins of the oxygen-evolving complex and a large number of cofactors. It forms dimeric complexes. The D1/D2 heterodimer binds P680, chlorophylls that are the primary electron donor of PSII, and subsequent electron acceptors. It shares a non-heme iron and each subunit binds pheophytin, quinone, additional chlorophylls, carotenoids and lipids. D1 provides most of the ligands for the Mn4-Ca-O5 cluster of the oxygen-evolving complex (OEC). There is also a Cl(-1) ion associated with D1 and D2, which is required for oxygen evolution. The PSII complex binds additional chlorophylls, carotenoids and specific lipids. is required as a cofactor. In terms of processing, tyr-161 forms a radical intermediate that is referred to as redox-active TyrZ, YZ or Y-Z. Post-translationally, C-terminally processed by CTPA; processing is essential to allow assembly of the oxygen-evolving complex and thus photosynthetic growth.

It is found in the plastid. It localises to the chloroplast thylakoid membrane. It carries out the reaction 2 a plastoquinone + 4 hnu + 2 H2O = 2 a plastoquinol + O2. Functionally, photosystem II (PSII) is a light-driven water:plastoquinone oxidoreductase that uses light energy to abstract electrons from H(2)O, generating O(2) and a proton gradient subsequently used for ATP formation. It consists of a core antenna complex that captures photons, and an electron transfer chain that converts photonic excitation into a charge separation. The D1/D2 (PsbA/PsbD) reaction center heterodimer binds P680, the primary electron donor of PSII as well as several subsequent electron acceptors. The polypeptide is Photosystem II protein D1 (Conocephalum conicum (Snakeskin liverwort)).